We begin with the raw amino-acid sequence, 138 residues long: uncharacterized protein (138 aa).

The protein belongs to the IIV-3 015R family.

This is an uncharacterized protein from Simulium iridescent virus (IIV-22).